We begin with the raw amino-acid sequence, 490 residues long: MSAIFEILDKDAGGRIGKLRTPHGVVETPTVMPVINPNIQLISPKEMRSFGAEILITNSYIIYRKEELRTVALEKGLHELLGFDGPIMTDSGSFQLSVYGSVEVTNEEILGFQEKIGSDIIVPLDIPTPPDVHFRRAEEELATTAERLEAARKFIQSKQLLAGPVQGSTYPELREKAASHLKDLNFEVYPLGAVVPLMESYRYAELVDVIAASKKGLSPTSPVHLFGAGHPMMFALAVALGCDLFDSAAYALYAKDGRYITSNGTYHLEKLNYLPCSCPVCSRYTAEELRKAKNKEELLGRHNLYATFAEIRLIKQSIKDGKLLELVEQRCRAHPKLLDGLKRLYTHSAWLEQFDPATKGTYFYCGPESASRPEVLRFGKRLERFSIEGSAIIRTSPVKGEKDYDRILTFKAPFGTFPAEMEEVYPFNAEVPKFPDYEALSTSLSNTIKLMDLNPGAEFTFICEKEFQHPLIEEIGKKAKLVYREAWKKE.

The active-site Nucleophile is Asp-90. Asp-125 and Ala-193 together coordinate substrate. 3 residues coordinate Zn(2+): Cys-276, Cys-278, and Cys-281.

Belongs to the archaeosine tRNA-ribosyltransferase family. Zn(2+) serves as cofactor.

It carries out the reaction guanosine(15) in tRNA + 7-cyano-7-deazaguanine = 7-cyano-7-carbaguanosine(15) in tRNA + guanine. It functions in the pathway tRNA modification; archaeosine-tRNA biosynthesis. Functionally, exchanges the guanine residue with 7-cyano-7-deazaguanine (preQ0) at position 15 in the dihydrouridine loop (D-loop) of archaeal tRNAs. The chain is tRNA-guanine(15) transglycosylase from Methanosarcina mazei (strain ATCC BAA-159 / DSM 3647 / Goe1 / Go1 / JCM 11833 / OCM 88) (Methanosarcina frisia).